We begin with the raw amino-acid sequence, 105 residues long: Malonate decarboxylase acyl carrier protein (105 aa).

At serine 28 the chain carries O-(phosphoribosyl dephospho-coenzyme A)serine.

The protein belongs to the MdcC family. Post-translationally, covalently binds the prosthetic group of malonate decarboxylase.

Its subcellular location is the cytoplasm. In terms of biological role, subunit of malonate decarboxylase, it is an acyl carrier protein to which acetyl and malonyl thioester residues are bound via a 2'-(5''-phosphoribosyl)-3'-dephospho-CoA prosthetic group and turn over during the catalytic mechanism. This Xanthomonas campestris pv. campestris (strain 8004) protein is Malonate decarboxylase acyl carrier protein.